Here is a 652-residue protein sequence, read N- to C-terminus: DNA ligase (652 aa).

NAD(+) contacts are provided by residues 29–33 (DSEYD), 78–79 (SL), and E107. The N6-AMP-lysine intermediate role is filled by K109. Positions 130, 164, 278, and 302 each coordinate NAD(+). Residues C395, C398, C413, and C418 each contribute to the Zn(2+) site. The 76-residue stretch at 577–652 (VADAALSGLT…VRDEAWLESL (76 aa)) folds into the BRCT domain.

Belongs to the NAD-dependent DNA ligase family. LigA subfamily. Requires Mg(2+) as cofactor. It depends on Mn(2+) as a cofactor.

It carries out the reaction NAD(+) + (deoxyribonucleotide)n-3'-hydroxyl + 5'-phospho-(deoxyribonucleotide)m = (deoxyribonucleotide)n+m + AMP + beta-nicotinamide D-nucleotide.. In terms of biological role, DNA ligase that catalyzes the formation of phosphodiester linkages between 5'-phosphoryl and 3'-hydroxyl groups in double-stranded DNA using NAD as a coenzyme and as the energy source for the reaction. It is essential for DNA replication and repair of damaged DNA. This Streptococcus pneumoniae serotype 4 (strain ATCC BAA-334 / TIGR4) protein is DNA ligase.